The chain runs to 307 residues: Acetaldehyde dehydrogenase (307 aa).

12-15 provides a ligand contact to NAD(+); sequence SGNI. Cys127 functions as the Acyl-thioester intermediate in the catalytic mechanism. NAD(+)-binding positions include 158–166 and Asn278; that span reads SAGPGTRQN.

It belongs to the acetaldehyde dehydrogenase family. In terms of assembly, monomer. Can also form a heterotetramer composed of two aldolase (TTHB246) and two dehydrogenase (TTHB247) subunits. Upon complex formation, the aldolase shows a 5-fold increase in substrate affinity, while the dehydrogenase shows a 3-fold decrease; the kcat values of each enzyme are reduced by 2-fold when they are in a complex.

It carries out the reaction acetaldehyde + NAD(+) + CoA = acetyl-CoA + NADH + H(+). The enzyme catalyses propanal + NAD(+) + CoA = propanoyl-CoA + NADH + H(+). Its function is as follows. Catalyzes the conversion of acetaldehyde or propanal to acetyl-CoA or propanoyl-CoA, respectively, using NAD(+) and coenzyme A. The aldehyde substrates can be directly channeled from the aldolase TTHB246 to the dehydrogenase TTHB247. Is the final enzyme in the meta-cleavage pathway for the degradation of aromatic compounds. The polypeptide is Acetaldehyde dehydrogenase (Thermus thermophilus (strain ATCC 27634 / DSM 579 / HB8)).